A 207-amino-acid chain; its full sequence is Hydrogenase expression/formation protein HoxM (207 aa).

Ni(2+) is bound by residues Glu-19, Asp-65, and His-96.

Belongs to the peptidase A31 family.

In terms of biological role, not known. Could be involved in the processing of hydrogenase. The chain is Hydrogenase expression/formation protein HoxM (hoxM) from Azotobacter vinelandii.